We begin with the raw amino-acid sequence, 288 residues long: Aminoglycoside N(3)-acetyltransferase VII (288 aa).

It belongs to the antibiotic N-acetyltransferase family.

The catalysed reaction is a 2-deoxystreptamine antibiotic + acetyl-CoA = an N(3)-acetyl-2-deoxystreptamine antibiotic + CoA + H(+). Functionally, resistance to paromomycin. This Streptomyces paromomycinus (Streptomyces rimosus subsp. paromomycinus) protein is Aminoglycoside N(3)-acetyltransferase VII (aacC7).